A 395-amino-acid polypeptide reads, in one-letter code: MAKAKFERTKPHVNIGTIGHVDHGKTTLTAAITTVLAKQGKAEAKAYDQIDAAPEERERGITISTAHVEYETDARHYAHVDCPGHADYVKNMITGAAQMDGAILVVSAADGPMPQTREHILLSRQVGVPYIVVFLNKCDMVDDEELLELVEMEVRDLLSEYDFPGDEVPVIKGSALKALEGDPQWEEKIIELMNAVDEYIPTPQREVDKPFMMPIEDVFSITGRGTVATGRVERGTLKVGDPVEIIGLSDEPKTTTVTGVEMFRKLLDQAEAGDNIGALLRGVSRDEVERGQVLAKPGSITPHTKFKAQVYVLTKEEGGRHTPFFSNYRPQFYFRTTDVTGIITLPEGVEMVMPGDNVEMTVELIAPIAIEEGTKFSIREGGRTVGAGSVSEIIE.

The tr-type G domain occupies 10 to 204 (KPHVNIGTIG…AVDEYIPTPQ (195 aa)). Residues 19 to 26 (GHVDHGKT) form a G1 region. 19–26 (GHVDHGKT) is a GTP binding site. Thr26 lines the Mg(2+) pocket. Residues 60 to 64 (GITIS) form a G2 region. Positions 81-84 (DCPG) are G3. GTP contacts are provided by residues 81–85 (DCPGH) and 136–139 (NKCD). The segment at 136 to 139 (NKCD) is G4. The G5 stretch occupies residues 174–176 (SAL).

This sequence belongs to the TRAFAC class translation factor GTPase superfamily. Classic translation factor GTPase family. EF-Tu/EF-1A subfamily. Monomer.

It localises to the cytoplasm. The enzyme catalyses GTP + H2O = GDP + phosphate + H(+). Its function is as follows. GTP hydrolase that promotes the GTP-dependent binding of aminoacyl-tRNA to the A-site of ribosomes during protein biosynthesis. This is Elongation factor Tu from Geobacillus kaustophilus (strain HTA426).